Consider the following 619-residue polypeptide: Protein CPn_1016/CP_0837/CPj1016/CpB1054 (619 aa).

Positions 591-619 (NAKKSEEQTSPQETPEVIRVSYPTTTSAL) are disordered.

Belongs to the chlamydial CPn_1016/CT_858/TC_0248 family.

In Chlamydia pneumoniae (Chlamydophila pneumoniae), this protein is Protein CPn_1016/CP_0837/CPj1016/CpB1054.